A 476-amino-acid polypeptide reads, in one-letter code: Bifunctional protein HldE (476 aa).

The tract at residues 1 to 319 (MKVTLPAFEK…GALASHQGES (319 aa)) is ribokinase. 195–198 (NMSE) contributes to the ATP binding site. D264 is an active-site residue. Residues 345 to 476 (MTNGCFDILH…SIIQNIMARQ (132 aa)) form a cytidylyltransferase region.

It in the N-terminal section; belongs to the carbohydrate kinase PfkB family. This sequence in the C-terminal section; belongs to the cytidylyltransferase family. As to quaternary structure, homodimer.

It carries out the reaction D-glycero-beta-D-manno-heptose 7-phosphate + ATP = D-glycero-beta-D-manno-heptose 1,7-bisphosphate + ADP + H(+). The catalysed reaction is D-glycero-beta-D-manno-heptose 1-phosphate + ATP + H(+) = ADP-D-glycero-beta-D-manno-heptose + diphosphate. Its pathway is nucleotide-sugar biosynthesis; ADP-L-glycero-beta-D-manno-heptose biosynthesis; ADP-L-glycero-beta-D-manno-heptose from D-glycero-beta-D-manno-heptose 7-phosphate: step 1/4. The protein operates within nucleotide-sugar biosynthesis; ADP-L-glycero-beta-D-manno-heptose biosynthesis; ADP-L-glycero-beta-D-manno-heptose from D-glycero-beta-D-manno-heptose 7-phosphate: step 3/4. Its function is as follows. Catalyzes the phosphorylation of D-glycero-D-manno-heptose 7-phosphate at the C-1 position to selectively form D-glycero-beta-D-manno-heptose-1,7-bisphosphate. In terms of biological role, catalyzes the ADP transfer from ATP to D-glycero-beta-D-manno-heptose 1-phosphate, yielding ADP-D-glycero-beta-D-manno-heptose. The polypeptide is Bifunctional protein HldE (Shewanella denitrificans (strain OS217 / ATCC BAA-1090 / DSM 15013)).